Here is a 584-residue protein sequence, read N- to C-terminus: DNA mismatch repair protein MutL (584 aa).

It belongs to the DNA mismatch repair MutL/HexB family.

In terms of biological role, this protein is involved in the repair of mismatches in DNA. It is required for dam-dependent methyl-directed DNA mismatch repair. May act as a 'molecular matchmaker', a protein that promotes the formation of a stable complex between two or more DNA-binding proteins in an ATP-dependent manner without itself being part of a final effector complex. The polypeptide is DNA mismatch repair protein MutL (Buchnera aphidicola subsp. Acyrthosiphon pisum (strain Tuc7)).